The chain runs to 156 residues: Small ribosomal subunit protein uS7 (156 aa).

The protein belongs to the universal ribosomal protein uS7 family. As to quaternary structure, part of the 30S ribosomal subunit. Contacts proteins S9 and S11.

One of the primary rRNA binding proteins, it binds directly to 16S rRNA where it nucleates assembly of the head domain of the 30S subunit. Is located at the subunit interface close to the decoding center, probably blocks exit of the E-site tRNA. The sequence is that of Small ribosomal subunit protein uS7 from Vibrio cholerae serotype O1 (strain ATCC 39315 / El Tor Inaba N16961).